We begin with the raw amino-acid sequence, 70 residues long: MWRPAKXPALRCVATDGHRLARIDAVLPEGANGMPGVIVPRKTVNELRNVLDDDEAQIAVSVSETRCALA.

This sequence belongs to the beta sliding clamp family. As to quaternary structure, forms a ring-shaped head-to-tail homodimer around DNA which binds and tethers DNA polymerases and other proteins to the DNA. The DNA replisome complex has a single clamp-loading complex (3 tau and 1 each of delta, delta', psi and chi subunits) which binds 3 Pol III cores (1 core on the leading strand and 2 on the lagging strand) each with a beta sliding clamp dimer. Additional proteins in the replisome are other copies of gamma, psi and chi, Ssb, DNA helicase and RNA primase.

The protein resides in the cytoplasm. Confers DNA tethering and processivity to DNA polymerases and other proteins. Acts as a clamp, forming a ring around DNA (a reaction catalyzed by the clamp-loading complex) which diffuses in an ATP-independent manner freely and bidirectionally along dsDNA. Initially characterized for its ability to contact the catalytic subunit of DNA polymerase III (Pol III), a complex, multichain enzyme responsible for most of the replicative synthesis in bacteria; Pol III exhibits 3'-5' exonuclease proofreading activity. The beta chain is required for initiation of replication as well as for processivity of DNA replication. The sequence is that of Beta sliding clamp (dnaN) from Rhodobacter capsulatus (Rhodopseudomonas capsulata).